A 60-amino-acid chain; its full sequence is Large ribosomal subunit protein bL32 (60 aa).

Belongs to the bacterial ribosomal protein bL32 family.

The sequence is that of Large ribosomal subunit protein bL32 from Thermosipho africanus (strain TCF52B).